A 1871-amino-acid chain; its full sequence is Protein RRP5 homolog (1871 aa).

Positions 1 to 62 (MANLEESFPR…KTKKLKIEKR (62 aa)) are disordered. Residue Ala2 is modified to N-acetylalanine. Ser7 is modified (phosphoserine). A compositionally biased stretch (basic residues) spans 43 to 59 (KRKKSQKGPAKTKKLKI). S1 motif domains follow at residues 83 to 171 (GMRI…LSLN), 187 to 258 (GMLL…LSVG), 281 to 346 (GLVV…LSLR), and 365 to 436 (GAVL…LSLR). Ser438 is subject to Phosphoserine. S1 motif domains lie at 453 to 522 (GAVV…MTLK), 542 to 611 (GLQT…LSFK), 636 to 707 (GQLV…LCRK), and 729 to 798 (GMLL…LSLR). The tract at residues 998–1018 (AAKRTMRPTQKDSETVDEDEE) is disordered. Lys1030 participates in a covalent cross-link: Glycyl lysine isopeptide (Lys-Gly) (interchain with G-Cter in SUMO1). S1 motif domains follow at residues 1036–1109 (GDMV…ISHP), 1149–1222 (GQTV…LSLT), 1230–1298 (GEVA…LSLR), and 1324–1396 (GQLL…LSFL). 2 positions are modified to phosphoserine: Ser1360 and Ser1362. Disordered regions lie at residues 1395–1531 (FLPG…APRL) and 1549–1586 (ALPP…KAEK). Lys1416 participates in a covalent cross-link: Glycyl lysine isopeptide (Lys-Gly) (interchain with G-Cter in SUMO2). Composition is skewed to basic and acidic residues over residues 1416 to 1459 (KQEE…EKQQ) and 1469 to 1484 (GGRE…ERVS). Phosphoserine occurs at positions 1476, 1493, and 1498. Residues 1575 to 1586 (KERELEKQKAEK) show a composition bias toward basic and acidic residues. 4 HAT repeats span residues 1599-1631 (GRQP…FHLQ), 1705-1737 (EKFQ…FLLR), 1775-1807 (GDAE…MTIK), and 1809-1844 (GSQK…YEKQ).

Interacts with NF-kappa-B p50/NFKB1 and NF-kappa-B p65/RELA.

Its subcellular location is the nucleus. It is found in the nucleolus. Functionally, essential for the generation of mature 18S rRNA, specifically necessary for cleavages at sites A0, 1 and 2 of the 47S precursor. Directly interacts with U3 snoRNA. In terms of biological role, involved in the biogenesis of rRNA. The protein is Protein RRP5 homolog (PDCD11) of Homo sapiens (Human).